Consider the following 215-residue polypeptide: Sodium channel regulatory subunit beta-3 (215 aa).

Residues methionine 1–cysteine 22 form the signal peptide. The Extracellular portion of the chain corresponds to phenylalanine 23 to valine 156. Cystine bridges form between cysteine 26–cysteine 48 and cysteine 45–cysteine 120. The Ig-like C2-type domain maps to glutamate 32 to threonine 154. N-linked (GlcNAc...) asparagine glycans are attached at residues asparagine 95, asparagine 109, asparagine 113, and asparagine 121. A helical transmembrane segment spans residues valine 157–isoleucine 178. Topologically, residues tyrosine 179–glutamate 215 are cytoplasmic.

The protein belongs to the sodium channel auxiliary subunit SCN3B (TC 8.A.17) family. A voltage-gated sodium (Nav) channel consists of an ion-conducting pore-forming alpha subunit functional on its own that is regulated by one or more beta subunits. Forms homodimers and homotrimers. SCN3B is non-covalently associated with alpha subunits and induces the formation of alpha subunit oligomers, including trimers. Interacts with SCN5A/Nav1.5; regulatory subunit of SCN5A/Nav1.5. Interacts with SCN7A/Nav2.1; probable regulatory subunit of SCN7A/Nav2.1. Interacts with SCN10A; regulatory subunit of SCN10A/Nav1.8. Interacts with NFASC; probably involved in targeting the sodium channels to the nodes of Ranvier. In terms of processing, intramolecular disulfide bonds favor the voltage-gated sodium channel oligomeric complex assembly. N-glycosylated.

The protein resides in the cell membrane. Functionally, regulatory subunit of multiple voltage-gated sodium (Nav) channels directly mediating the depolarization of excitable membranes. Navs, also called VGSCs (voltage-gated sodium channels) or VDSCs (voltage-dependent sodium channels), operate by switching between closed and open conformations depending on the voltage difference across the membrane. In the open conformation they allow Na(+) ions to selectively pass through the pore, along their electrochemical gradient. The influx of Na+ ions provokes membrane depolarization, initiating the propagation of electrical signals throughout cells and tissues. The accessory beta subunits participate in localization and functional modulation of the Nav channels. Modulates the activity of SCN2A/Nav1.2, causing a hyperpolarizing shift in the voltage-dependence of inactivation of the channel and increasing the fraction of channels operating in the fast gating mode. Modulates the activity of SCN5A/Nav1.5. Could also regulate the atypical sodium channel SCN7A/Nav2.1. Modulates the activity of SCN10A/Nav1.8, regulating its oligomerization and accelerating the recovery from inactivation. The polypeptide is Sodium channel regulatory subunit beta-3 (Bos taurus (Bovine)).